Reading from the N-terminus, the 282-residue chain is Pantothenate synthetase (282 aa).

30–37 (MGYLHEGH) contributes to the ATP binding site. The active-site Proton donor is the histidine 37. Glutamine 61 lines the (R)-pantoate pocket. Glutamine 61 contributes to the beta-alanine binding site. An ATP-binding site is contributed by 147–150 (GMKD). Glutamine 153 contacts (R)-pantoate. ATP is bound by residues valine 176 and 184–187 (KSSR).

It belongs to the pantothenate synthetase family. In terms of assembly, homodimer.

Its subcellular location is the cytoplasm. It catalyses the reaction (R)-pantoate + beta-alanine + ATP = (R)-pantothenate + AMP + diphosphate + H(+). Its pathway is cofactor biosynthesis; (R)-pantothenate biosynthesis; (R)-pantothenate from (R)-pantoate and beta-alanine: step 1/1. Functionally, catalyzes the condensation of pantoate with beta-alanine in an ATP-dependent reaction via a pantoyl-adenylate intermediate. In Bacillus mycoides (strain KBAB4) (Bacillus weihenstephanensis), this protein is Pantothenate synthetase.